The sequence spans 410 residues: Multifunctional CCA protein (410 aa).

Residues Gly-8 and Arg-11 each contribute to the ATP site. The CTP site is built by Gly-8 and Arg-11. The Mg(2+) site is built by Glu-21 and Asp-23. Residues Arg-91, Arg-137, and Arg-140 each coordinate ATP. Positions 91, 137, and 140 each coordinate CTP. In terms of domain architecture, HD spans 228–329 (TLLHQFLCLK…WKLFKSLDIL (102 aa)).

This sequence belongs to the tRNA nucleotidyltransferase/poly(A) polymerase family. Bacterial CCA-adding enzyme type 1 subfamily. As to quaternary structure, monomer. Can also form homodimers and oligomers. It depends on Mg(2+) as a cofactor. Ni(2+) is required as a cofactor.

It carries out the reaction a tRNA precursor + 2 CTP + ATP = a tRNA with a 3' CCA end + 3 diphosphate. It catalyses the reaction a tRNA with a 3' CCA end + 2 CTP + ATP = a tRNA with a 3' CCACCA end + 3 diphosphate. Functionally, catalyzes the addition and repair of the essential 3'-terminal CCA sequence in tRNAs without using a nucleic acid template. Adds these three nucleotides in the order of C, C, and A to the tRNA nucleotide-73, using CTP and ATP as substrates and producing inorganic pyrophosphate. tRNA 3'-terminal CCA addition is required both for tRNA processing and repair. Also involved in tRNA surveillance by mediating tandem CCA addition to generate a CCACCA at the 3' terminus of unstable tRNAs. While stable tRNAs receive only 3'-terminal CCA, unstable tRNAs are marked with CCACCA and rapidly degraded. In Alcanivorax borkumensis (strain ATCC 700651 / DSM 11573 / NCIMB 13689 / SK2), this protein is Multifunctional CCA protein.